A 443-amino-acid polypeptide reads, in one-letter code: ATP-dependent protease ATPase subunit HslU (443 aa).

ATP-binding positions include Ile18, 60-65 (GVGKTE), Asp256, Glu321, and Arg393.

This sequence belongs to the ClpX chaperone family. HslU subfamily. In terms of assembly, a double ring-shaped homohexamer of HslV is capped on each side by a ring-shaped HslU homohexamer. The assembly of the HslU/HslV complex is dependent on binding of ATP.

It is found in the cytoplasm. In terms of biological role, ATPase subunit of a proteasome-like degradation complex; this subunit has chaperone activity. The binding of ATP and its subsequent hydrolysis by HslU are essential for unfolding of protein substrates subsequently hydrolyzed by HslV. HslU recognizes the N-terminal part of its protein substrates and unfolds these before they are guided to HslV for hydrolysis. The protein is ATP-dependent protease ATPase subunit HslU of Escherichia coli O17:K52:H18 (strain UMN026 / ExPEC).